A 66-amino-acid chain; its full sequence is Large ribosomal subunit protein bL33c (66 aa).

This sequence belongs to the bacterial ribosomal protein bL33 family.

The protein resides in the plastid. The chain is Large ribosomal subunit protein bL33c (rpl33) from Epifagus virginiana (Beechdrops).